Reading from the N-terminus, the 65-residue chain is Large ribosomal subunit protein bL35 (65 aa).

This sequence belongs to the bacterial ribosomal protein bL35 family.

This chain is Large ribosomal subunit protein bL35, found in Thermus thermophilus (strain ATCC BAA-163 / DSM 7039 / HB27).